A 406-amino-acid polypeptide reads, in one-letter code: Argininosuccinate synthase (406 aa).

An ATP-binding site is contributed by Ala-9–Ser-17. Tyr-86 contributes to the L-citrulline binding site. Gly-116 is a binding site for ATP. L-aspartate contacts are provided by Thr-118, Asn-122, and Asp-123. Asn-122 lines the L-citrulline pocket. L-citrulline contacts are provided by Arg-126, Ser-174, Ser-183, Glu-259, and Tyr-271.

Belongs to the argininosuccinate synthase family. Type 1 subfamily. In terms of assembly, homotetramer.

It is found in the cytoplasm. It catalyses the reaction L-citrulline + L-aspartate + ATP = 2-(N(omega)-L-arginino)succinate + AMP + diphosphate + H(+). Its pathway is amino-acid biosynthesis; L-arginine biosynthesis; L-arginine from L-ornithine and carbamoyl phosphate: step 2/3. The protein is Argininosuccinate synthase of Geobacillus thermodenitrificans (strain NG80-2).